The chain runs to 478 residues: Ribosomal RNA small subunit methyltransferase F (478 aa).

S-adenosyl-L-methionine is bound by residues 125 to 131 (AAAPGSK), Glu149, Asp176, and Asp194. Residue Cys247 is the Nucleophile of the active site.

Belongs to the class I-like SAM-binding methyltransferase superfamily. RsmB/NOP family.

The protein localises to the cytoplasm. The enzyme catalyses cytidine(1407) in 16S rRNA + S-adenosyl-L-methionine = 5-methylcytidine(1407) in 16S rRNA + S-adenosyl-L-homocysteine + H(+). Functionally, specifically methylates the cytosine at position 1407 (m5C1407) of 16S rRNA. This is Ribosomal RNA small subunit methyltransferase F from Serratia proteamaculans (strain 568).